The chain runs to 154 residues: Phospholipase A2 OS1 (154 aa).

The first 27 residues, 1 to 27, serve as a signal peptide directing secretion; sequence MHPAHLLVLLAVCVSLLGAARIPPLPL. 7 cysteine pairs are disulfide-bonded: Cys38-Cys104, Cys54-Cys153, Cys56-Cys72, Cys71-Cys132, Cys78-Cys125, Cys88-Cys118, and Cys111-Cys123. Positions 57 and 59 each coordinate Ca(2+). His75 is a catalytic residue. Asp76 contributes to the Ca(2+) binding site. Asp126 is an active-site residue.

It belongs to the phospholipase A2 family. Group I subfamily. D49 sub-subfamily. In terms of assembly, monomer. The cofactor is Ca(2+). As to expression, expressed by the venom gland.

Its subcellular location is the secreted. It catalyses the reaction a 1,2-diacyl-sn-glycero-3-phosphocholine + H2O = a 1-acyl-sn-glycero-3-phosphocholine + a fatty acid + H(+). Snake venom phospholipase A2 (PLA2) that has a low specific activity on phospholipid substrates, and is neither neurotoxic, nor myotoxic. Induces endothelial cell migration which is mediated, at least in part, by its hydrolytic products. Shows antimalarial activity, but is not able to potently inhibit HIV-1 replication. Binds in a calcium-independent fashion with very high affinity to a muscle-type (M-type) PLA2 receptor, but is a very poor ligand for neuronal-type (N-type) receptors. PLA2 catalyzes the calcium-dependent hydrolysis of the 2-acyl groups in 3-sn-phosphoglycerides. The chain is Phospholipase A2 OS1 from Oxyuranus scutellatus scutellatus (Australian taipan).